A 489-amino-acid polypeptide reads, in one-letter code: Cobyric acid synthase (489 aa).

Residues 251-444 enclose the GATase cobBQ-type domain; the sequence is GLIIAVIRLP…LHGIFANDTF (194 aa). C329 functions as the Nucleophile in the catalytic mechanism. H436 is an active-site residue.

The protein belongs to the CobB/CobQ family. CobQ subfamily.

Its pathway is cofactor biosynthesis; adenosylcobalamin biosynthesis. Catalyzes amidations at positions B, D, E, and G on adenosylcobyrinic A,C-diamide. NH(2) groups are provided by glutamine, and one molecule of ATP is hydrogenolyzed for each amidation. This Chloroflexus aurantiacus (strain ATCC 29366 / DSM 635 / J-10-fl) protein is Cobyric acid synthase.